A 256-amino-acid chain; its full sequence is Small ribosomal subunit protein eS1 (256 aa).

Positions 1–18 (MAVGKNKRLSKGKKGLKK) are enriched in basic residues. The disordered stretch occupies residues 1 to 20 (MAVGKNKRLSKGKKGLKKRT). At Ala-2 the chain carries N-acetylalanine; partial.

The protein belongs to the eukaryotic ribosomal protein eS1 family. Component of the small ribosomal subunit. Mature ribosomes consist of a small (40S) and a large (60S) subunit. The 40S subunit contains about 33 different proteins and 1 molecule of RNA (18S). The 60S subunit contains about 49 different proteins and 3 molecules of RNA (25S, 5.8S and 5S).

Its subcellular location is the cytoplasm. In Talaromyces stipitatus (strain ATCC 10500 / CBS 375.48 / QM 6759 / NRRL 1006) (Penicillium stipitatum), this protein is Small ribosomal subunit protein eS1 (rps1).